A 204-amino-acid polypeptide reads, in one-letter code: Inactive ribonuclease-like protein 9 (204 aa).

The signal sequence occupies residues 1–26 (MMRTLITTHPLLLLLLLQQLLQPVQF). 3 disulfides stabilise this stretch: C97/C152, C115/C167, and C122/C129. N-linked (GlcNAc...) asparagine glycosylation is found at N130 and N142.

It belongs to the pancreatic ribonuclease family.

Its subcellular location is the secreted. In terms of biological role, does not exhibit any ribonuclease activity. The chain is Inactive ribonuclease-like protein 9 (RNASE9) from Macaca mulatta (Rhesus macaque).